A 690-amino-acid polypeptide reads, in one-letter code: DNA topoisomerase 1 (690 aa).

The region spanning 3-121 (DYLVIVESPA…EITKQAIKDA (119 aa)) is the Toprim domain. Mg(2+) is bound by residues glutamate 9 and aspartate 82. The region spanning 129–558 (NMDLVDAQQA…DFYKGFEERL (430 aa)) is the Topo IA-type catalytic domain. Positions 163-168 (SAGRVQ) are interaction with DNA. The active-site O-(5'-phospho-DNA)-tyrosine intermediate is tyrosine 298. The tract at residues 329-354 (NGTKAVKKDKKSQDAHEAIRPTSVER) is disordered. The span at 339 to 354 (KSQDAHEAIRPTSVER) shows a compositional bias: basic and acidic residues. C4-type zinc fingers lie at residues 579–605 (CEKC…FPDC), 619–647 (CPKC…YPEC), and 660–683 (CPKC…CSSC).

This sequence belongs to the type IA topoisomerase family. Monomer. The cofactor is Mg(2+).

The catalysed reaction is ATP-independent breakage of single-stranded DNA, followed by passage and rejoining.. In terms of biological role, releases the supercoiling and torsional tension of DNA, which is introduced during the DNA replication and transcription, by transiently cleaving and rejoining one strand of the DNA duplex. Introduces a single-strand break via transesterification at a target site in duplex DNA. The scissile phosphodiester is attacked by the catalytic tyrosine of the enzyme, resulting in the formation of a DNA-(5'-phosphotyrosyl)-enzyme intermediate and the expulsion of a 3'-OH DNA strand. The free DNA strand then undergoes passage around the unbroken strand, thus removing DNA supercoils. Finally, in the religation step, the DNA 3'-OH attacks the covalent intermediate to expel the active-site tyrosine and restore the DNA phosphodiester backbone. This chain is DNA topoisomerase 1, found in Halalkalibacterium halodurans (strain ATCC BAA-125 / DSM 18197 / FERM 7344 / JCM 9153 / C-125) (Bacillus halodurans).